The following is a 283-amino-acid chain: Pantothenate synthetase (283 aa).

Residue 26–33 (MGNLHEGH) coordinates ATP. Catalysis depends on H33, which acts as the Proton donor. Q57 serves as a coordination point for (R)-pantoate. Q57 serves as a coordination point for beta-alanine. 144–147 (GKKD) lines the ATP pocket. Position 150 (Q150) interacts with (R)-pantoate. 181–184 (LSSR) provides a ligand contact to ATP.

Belongs to the pantothenate synthetase family. Homodimer.

It is found in the cytoplasm. The enzyme catalyses (R)-pantoate + beta-alanine + ATP = (R)-pantothenate + AMP + diphosphate + H(+). It functions in the pathway cofactor biosynthesis; (R)-pantothenate biosynthesis; (R)-pantothenate from (R)-pantoate and beta-alanine: step 1/1. Functionally, catalyzes the condensation of pantoate with beta-alanine in an ATP-dependent reaction via a pantoyl-adenylate intermediate. The protein is Pantothenate synthetase of Variovorax paradoxus (strain S110).